Consider the following 233-residue polypeptide: MSTESMIRDVELAEEALPKKTGGPQGSRRCLFLSLFSFLLVAGATTLFCLLHFGVIGPQREEFPKDPSLISPLAQAVRSSSRTPSDKPVAHVVANPQAEGQLQWLNRRANALLANGVELRDNQLVVPSEGLYLIYSQVLFKGQGCPSTHVLLTHTISRIAVSYQTKVNLLSAIKSPCQRETPEGAEAKPWYEPIYLGGVFQLEKGDRLSAEINLPDYLDFAESGQVYFGIIAL.

At 1 to 35 (MSTESMIRDVELAEEALPKKTGGPQGSRRCLFLSL) the chain is on the cytoplasmic side. S2 carries the phosphoserine; by CK1 modification. 2 N6-myristoyl lysine lipidation sites follow: K19 and K20. A helical; Signal-anchor for type II membrane protein membrane pass occupies residues 36–56 (FSFLLVAGATTLFCLLHFGVI). Residues 57–233 (GPQREEFPKD…GQVYFGIIAL (177 aa)) are Extracellular-facing. The O-linked (GalNAc...) serine; in soluble form glycan is linked to S80. The THD domain occupies 88–233 (PVAHVVANPQ…GQVYFGIIAL (146 aa)). C145 and C177 are oxidised to a cystine.

Belongs to the tumor necrosis factor family. As to quaternary structure, homotrimer. Interacts with SPPL2B. In terms of processing, the soluble form derives from the membrane form by proteolytic processing. The membrane-bound form is further proteolytically processed by SPPL2A or SPPL2B through regulated intramembrane proteolysis producing TNF intracellular domains (ICD1 and ICD2) released in the cytosol and TNF C-domain 1 and C-domain 2 secreted into the extracellular space. Post-translationally, the membrane form, but not the soluble form, is phosphorylated on serine residues. Dephosphorylation of the membrane form occurs by binding to soluble TNFRSF1A/TNFR1. O-glycosylated; glycans contain galactose, N-acetylgalactosamine and N-acetylneuraminic acid. In terms of processing, the soluble form is demyristoylated by SIRT6, promoting its secretion.

The protein resides in the cell membrane. Its subcellular location is the membrane. It is found in the secreted. Its function is as follows. Cytokine that binds to TNFRSF1A/TNFR1 and TNFRSF1B/TNFBR. It is mainly secreted by macrophages and can induce cell death of certain tumor cell lines. It is potent pyrogen causing fever by direct action or by stimulation of interleukin-1 secretion and is implicated in the induction of cachexia, Under certain conditions it can stimulate cell proliferation and induce cell differentiation. Induces insulin resistance in adipocytes via inhibition of insulin-induced IRS1 tyrosine phosphorylation and insulin-induced glucose uptake. Induces GKAP42 protein degradation in adipocytes which is partially responsible for TNF-induced insulin resistance. Plays a role in angiogenesis by inducing VEGF production synergistically with IL1B and IL6. Promotes osteoclastogenesis and therefore mediates bone resorption. The TNF intracellular domain (ICD) form induces IL12 production in dendritic cells. This is Tumor necrosis factor (TNF) from Papio sp. (Baboon).